A 258-amino-acid polypeptide reads, in one-letter code: UPF0246 protein IL2146 (258 aa).

This sequence belongs to the UPF0246 family.

The sequence is that of UPF0246 protein IL2146 from Idiomarina loihiensis (strain ATCC BAA-735 / DSM 15497 / L2-TR).